A 197-amino-acid polypeptide reads, in one-letter code: Holliday junction resolvase RecU (197 aa).

Residues 1–21 (MVNYPSGVRAGGYPQKKKNQN) are disordered. 4 residues coordinate Mg(2+): Thr82, Asp84, Asp97, and Gln116.

This sequence belongs to the RecU family. It depends on Mg(2+) as a cofactor.

It is found in the cytoplasm. It carries out the reaction Endonucleolytic cleavage at a junction such as a reciprocal single-stranded crossover between two homologous DNA duplexes (Holliday junction).. Functionally, endonuclease that resolves Holliday junction intermediates in genetic recombination. Cleaves mobile four-strand junctions by introducing symmetrical nicks in paired strands. Promotes annealing of linear ssDNA with homologous dsDNA. Required for DNA repair, homologous recombination and chromosome segregation. The polypeptide is Holliday junction resolvase RecU (Oenococcus oeni (strain ATCC BAA-331 / PSU-1)).